We begin with the raw amino-acid sequence, 386 residues long: Lipid-A-disaccharide synthase (386 aa).

Belongs to the LpxB family.

It catalyses the reaction a lipid X + a UDP-2-N,3-O-bis[(3R)-3-hydroxyacyl]-alpha-D-glucosamine = a lipid A disaccharide + UDP + H(+). The protein operates within bacterial outer membrane biogenesis; LPS lipid A biosynthesis. Condensation of UDP-2,3-diacylglucosamine and 2,3-diacylglucosamine-1-phosphate to form lipid A disaccharide, a precursor of lipid A, a phosphorylated glycolipid that anchors the lipopolysaccharide to the outer membrane of the cell. The chain is Lipid-A-disaccharide synthase from Chromobacterium violaceum (strain ATCC 12472 / DSM 30191 / JCM 1249 / CCUG 213 / NBRC 12614 / NCIMB 9131 / NCTC 9757 / MK).